The sequence spans 124 residues: Fluoride-specific ion channel FluC 1 (124 aa).

The next 4 helical transmembrane spans lie at 1–21 (MNWL…YVTD), 30–50 (AVFP…LGLL), 56–76 (AGVA…GALT), and 102–122 (IASV…AQAL). Na(+)-binding residues include Gly73 and Thr76.

The protein belongs to the fluoride channel Fluc/FEX (TC 1.A.43) family.

Its subcellular location is the cell membrane. The enzyme catalyses fluoride(in) = fluoride(out). Na(+) is not transported, but it plays an essential structural role and its presence is essential for fluoride channel function. Its function is as follows. Fluoride-specific ion channel. Important for reducing fluoride concentration in the cell, thus reducing its toxicity. The chain is Fluoride-specific ion channel FluC 1 from Streptomyces avermitilis (strain ATCC 31267 / DSM 46492 / JCM 5070 / NBRC 14893 / NCIMB 12804 / NRRL 8165 / MA-4680).